Reading from the N-terminus, the 134-residue chain is Translation initiation factor 2 subunit beta (134 aa).

Over residues 1-12 (MEYDDMLDRAME) the composition is skewed to basic and acidic residues. Positions 1–28 (MEYDDMLDRAMEETPEIDGTSERFEVPD) are disordered.

The protein belongs to the eIF-2-beta/eIF-5 family. Heterotrimer composed of an alpha, a beta and a gamma chain.

Functionally, eIF-2 functions in the early steps of protein synthesis by forming a ternary complex with GTP and initiator tRNA. The sequence is that of Translation initiation factor 2 subunit beta from Haloarcula marismortui (strain ATCC 43049 / DSM 3752 / JCM 8966 / VKM B-1809) (Halobacterium marismortui).